Reading from the N-terminus, the 287-residue chain is 1-acyl-sn-glycerol-3-phosphate acyltransferase alpha (287 aa).

An N-terminal signal peptide occupies residues 1 to 26 (MELWPGAGTLLLLLFLLLLLLLPTLW). Topologically, residues 27 to 37 (FCSPSAKYFFK) are lumenal. Residues 38–58 (MAFYNGWILFLAVLAIPVCAV) traverse the membrane as a helical segment. At 59-127 (RGRNVENMKI…PGRCVPIAKR (69 aa)) the chain is on the cytoplasmic side. Positions 104–109 (HQSSLD) match the HXXXXD motif motif. Residues 128–148 (ELLWAGSAGLACWLAGVIFID) traverse the membrane as a helical segment. Residues 149 to 287 (RKRTGDAISV…KPGGVGEAGL (139 aa)) are Lumenal-facing. The EGTR motif motif lies at 178-181 (EGTR).

Belongs to the 1-acyl-sn-glycerol-3-phosphate acyltransferase family.

The protein localises to the endoplasmic reticulum membrane. The enzyme catalyses a 1-acyl-sn-glycero-3-phosphate + an acyl-CoA = a 1,2-diacyl-sn-glycero-3-phosphate + CoA. It catalyses the reaction 1-(9Z-octadecenoyl)-sn-glycero-3-phosphate + (9Z)-octadecenoyl-CoA = 1,2-di-(9Z-octadecenoyl)-sn-glycero-3-phosphate + CoA. The catalysed reaction is 1-(9Z-octadecenoyl)-sn-glycero-3-phosphate + hexadecanoyl-CoA = 1-(9Z)-octadecenoyl-2-hexadecanoyl-sn-glycero-3-phosphate + CoA. It carries out the reaction heptadecanoyl-CoA + 1-(9Z-octadecenoyl)-sn-glycero-3-phosphate = 1-(9Z)-octadecenoyl-2-heptadecanoyl-sn-glycero-3-phosphate + CoA. The enzyme catalyses 1-(9Z-octadecenoyl)-sn-glycero-3-phosphate + octadecanoyl-CoA = 1-(9Z-octadecenoyl)-2-octadecanoyl-sn-glycero-3-phosphate + CoA. It catalyses the reaction 1-(9Z-octadecenoyl)-sn-glycero-3-phosphate + (9Z,12Z)-octadecadienoyl-CoA = 1-(9Z)-octadecenoyl-2-(9Z,12Z)-octadecadienoyl-sn-glycero-3-phosphate + CoA. The catalysed reaction is 1-(9Z-octadecenoyl)-sn-glycero-3-phosphate + tetradecanoyl-CoA = 1-(9Z)-octadecenoyl-2-tetradecanoyl-sn-glycero-3-phosphate + CoA. It carries out the reaction pentadecanoyl-CoA + 1-(9Z-octadecenoyl)-sn-glycero-3-phosphate = 1-(9Z)-octadecenoyl-2-pentadecanoyl-sn-glycero-3-phosphate + CoA. The enzyme catalyses 1-hexadecanoyl-sn-glycero-3-phosphate + (9Z)-octadecenoyl-CoA = 1-hexadecanoyl-2-(9Z-octadecenoyl)-sn-glycero-3-phosphate + CoA. It catalyses the reaction 1-(9Z,12Z,15Z)-octadecatrienoyl-sn-glycero-3-phosphate + (9Z)-octadecenoyl-CoA = 1-(9Z,12Z,15Z)-octadecatrienoyl-2-(9Z)-octadecenoyl-sn-glycero-3-phosphate + CoA. The catalysed reaction is 1-(6Z,9Z,12Z-octadecatrienoyl)-sn-glycero-3-phosphate + (9Z)-octadecenoyl-CoA = (6Z,9Z,12Z)-octadecatrienoyl-2-(9Z)-octadecenoyl-sn-glycero-3-phosphate + CoA. It carries out the reaction 1-eicosanoyl-sn-glycero-3-phosphate + (9Z)-octadecenoyl-CoA = 1-eicosanoyl-2-(9Z)-octadecenoyl-sn-glycero-3-phosphate + CoA. The enzyme catalyses 1-tetradecanoyl-sn-glycerol 3-phosphate + (9Z)-octadecenoyl-CoA = 1-tetradecanoyl-2-(9Z)-octadecenoyl-sn-glycero-3-phosphate + CoA. It catalyses the reaction 1-(9Z-octadecenoyl)-sn-glycero-3-phosphate + (5Z,8Z,11Z,14Z)-eicosatetraenoyl-CoA = 1-(9Z)-octadecenoyl-2-(5Z,8Z,11Z,14Z)-eicosatetraenoyl-sn-glycero-3-phosphate + CoA. The catalysed reaction is 1-(9Z-octadecenoyl)-sn-glycero-3-phosphate + dodecanoyl-CoA = 1-(9Z)-octadecenoyl-2-dodecanoyl-sn-glycero-3-phosphate + CoA. It carries out the reaction (6Z)-octadecenoyl-CoA + 1-(9Z-octadecenoyl)-sn-glycero-3-phosphate = 1-(9Z)-octadecenoyl-2-(6Z)-octadecenoyl-sn-glycero-3-phosphate + CoA. The enzyme catalyses (11Z)-octadecenoyl-CoA + 1-(9Z-octadecenoyl)-sn-glycero-3-phosphate = 1-(9Z)-octadecenoyl-2-(11Z)-octadecenoyl-sn-glycero-3-phosphate + CoA. It catalyses the reaction (9Z)-hexadecenoyl-CoA + 1-(9Z-octadecenoyl)-sn-glycero-3-phosphate = 1-(9Z-octadecenoyl)-2-(9Z-hexadecenoyl)-sn-glycero-3-phosphate + CoA. It functions in the pathway phospholipid metabolism; CDP-diacylglycerol biosynthesis; CDP-diacylglycerol from sn-glycerol 3-phosphate: step 2/3. Its function is as follows. Converts 1-acyl-sn-glycerol-3-phosphate (lysophosphatidic acid or LPA) into 1,2-diacyl-sn-glycerol-3-phosphate (phosphatidic acid or PA) by incorporating an acyl moiety at the sn-2 position of the glycerol backbone. The sequence is that of 1-acyl-sn-glycerol-3-phosphate acyltransferase alpha (AGPAT1) from Bos taurus (Bovine).